The chain runs to 207 residues: ATP synthase subunit b 2 (207 aa).

A helical transmembrane segment spans residues 58–78 (LLWLVITFGVFYLLMQKVIAP).

Belongs to the ATPase B chain family. As to quaternary structure, F-type ATPases have 2 components, F(1) - the catalytic core - and F(0) - the membrane proton channel. F(1) has five subunits: alpha(3), beta(3), gamma(1), delta(1), epsilon(1). F(0) has three main subunits: a(1), b(2) and c(10-14). The alpha and beta chains form an alternating ring which encloses part of the gamma chain. F(1) is attached to F(0) by a central stalk formed by the gamma and epsilon chains, while a peripheral stalk is formed by the delta and b chains.

It is found in the cell inner membrane. Its function is as follows. F(1)F(0) ATP synthase produces ATP from ADP in the presence of a proton or sodium gradient. F-type ATPases consist of two structural domains, F(1) containing the extramembraneous catalytic core and F(0) containing the membrane proton channel, linked together by a central stalk and a peripheral stalk. During catalysis, ATP synthesis in the catalytic domain of F(1) is coupled via a rotary mechanism of the central stalk subunits to proton translocation. In terms of biological role, component of the F(0) channel, it forms part of the peripheral stalk, linking F(1) to F(0). The b'-subunit is a diverged and duplicated form of b found in plants and photosynthetic bacteria. This is ATP synthase subunit b 2 (atpF2) from Rhizobium johnstonii (strain DSM 114642 / LMG 32736 / 3841) (Rhizobium leguminosarum bv. viciae).